We begin with the raw amino-acid sequence, 471 residues long: Ubiquitin-conjugating enzyme E2 variant 3 (471 aa).

Residues 2–145 form the UEV domain; sequence DVNSEPVKKV…EEEPPLGTKS (144 aa). 183 to 211 lines the NAD(+) pocket; the sequence is GDLGIAAVLSIMAKSCVDKLVLIDIPENS.

This sequence in the N-terminal section; belongs to the ubiquitin-conjugating enzyme family. UEV subfamily. In the C-terminal section; belongs to the LDH/MDH superfamily. Homodimer.

Functionally, possible negative regulator of polyubiquitination. The polypeptide is Ubiquitin-conjugating enzyme E2 variant 3 (uevld) (Danio rerio (Zebrafish)).